The primary structure comprises 109 residues: Archaeosine synthase (109 aa).

The Thioimide intermediate role is filled by Cys-21. Asp-28 acts as the Proton donor/acceptor in catalysis. Residues Asp-28, 43 to 46, and 62 to 63 each bind substrate; these read LAIE and HE.

Belongs to the archaeosine synthase type 2 family. As to quaternary structure, forms a symmetric tunnel-fold (T-fold) homodecamer of two head-to-head facing pentameric subunits, with 10 active sites at the intermonomer interfaces.

It carries out the reaction 7-cyano-7-carbaguanosine(15) in tRNA + NH4(+) = archaeosine(15) in tRNA. The protein operates within tRNA modification; archaeosine-tRNA biosynthesis. Is responsible for the final step in the biosynthesis of archaeosine, a modified nucleoside present in the dihydrouridine loop (D-loop) of archaeal tRNA. Catalyzes the conversion of 7-cyano-7-deazaguanine (preQ0)-modified tRNA to archaeosine-tRNA, transforming a nitrile group to a formamidine group. Can use neither glutamine nor asparagine as amino donor in vitro, is only able to utilize free ammonium. However, the enzyme might function in vivo with a partner that serves to generate ammonium. The polypeptide is Archaeosine synthase (Pyrobaculum calidifontis (strain DSM 21063 / JCM 11548 / VA1)).